Consider the following 424-residue polypeptide: UPF0597 protein Sbal_3070 (424 aa).

Belongs to the UPF0597 family.

In Shewanella baltica (strain OS155 / ATCC BAA-1091), this protein is UPF0597 protein Sbal_3070.